We begin with the raw amino-acid sequence, 300 residues long: Acyl-CoA-binding domain-containing protein 6 (300 aa).

A compositionally biased stretch (low complexity) spans 1-19 (MASRSPSSSPDSATGSGTD). A disordered region spans residues 1 to 43 (MASRSPSSSPDSATGSGTDPARPDTGEPLGGGSDSDSDFGLGK). The ACB domain occupies 60 to 145 (LENEFESAAD…VHALDPEGSQ (86 aa)). Residues 87–91 (YARFK), lysine 113, and tyrosine 132 each bind an acyl-CoA. Residues 142–162 (EGSQKSSERRGGEKRTGFGGP) form a disordered region. Over residues 147–157 (SSERRGGEKRT) the composition is skewed to basic and acidic residues. ANK repeat units follow at residues 209–238 (EGRALLHWACDRGHKDLVSLLLQNNADINS) and 242–271 (EGQTALHYASACEFAEIVELLLKAGADPSI). The interval 270 to 300 (SIKDQEGSLPEEVTESSAISSLLRQYTAPKG) is disordered. A compositionally biased stretch (polar residues) spans 284 to 293 (ESSAISSLLR).

Higly expressed in the central nervous system, developing eyes, otic vesicle, and trunk muscles.

It localises to the cytoplasm. The protein localises to the nucleus. Binds long-chain acyl-coenzyme A molecules with a strong preference for unsaturated C18:1-CoA. Does not bind fatty acids. Plays a role in protein N-myristoylation. The polypeptide is Acyl-CoA-binding domain-containing protein 6 (acbd6) (Danio rerio (Zebrafish)).